A 177-amino-acid chain; its full sequence is MASSSLLVTIFLCISVFFFSSVNANEVTVGGKSGDWKIPPSSSFSFNEWAQKARFKVGDFIVFKYEAGKDSVLQVTREAYEKCNTTSPKASYTDGNTKVKLDQAGPVYFVSGTEGHCQKGQKLRLVVITPRNSAFSPGPSPSEFDGPAVAPTSGAAKLAGGFSVVFGLVLGLWAFFF.

An N-terminal signal peptide occupies residues M1–A24. Residues N25–T129 form the Phytocyanin domain. C83 and C117 are joined by a disulfide. An N-linked (GlcNAc...) asparagine glycan is attached at N84. S153 carries GPI-anchor amidated serine lipidation. The propeptide at G154–F177 is removed in mature form.

This sequence belongs to the early nodulin-like (ENODL) family. As to expression, mostly expressed in seedlings, siliques and flowers, and, to a lower extent, in roots, stems and seeds, but barely in leaves.

The protein resides in the cell membrane. In terms of biological role, may act as a carbohydrate transporter. Required, together with ENODL11, ENODL12, ENODL13, ENODL14 and ENODL15, for male-female communication and pollen tube reception and burst at the synergid cell surface of the female gametophyte. The polypeptide is Early nodulin-like protein 15 (Arabidopsis thaliana (Mouse-ear cress)).